The chain runs to 212 residues: MSTENTNTAVAEEIPNLLITPSAQEYLHELLAKQNTPGIGVRIFVEHPGTPRAECCMAYSAPEEVVPTDYKQDYPDFPAYIDAPSIPYLLDAVIDYNKDRFGGQLTFRAPNSKVPRVGPDASIEERITYVLQAEINPGLAGHGGNCSLVEVQDDPEHGLTAVLKFGGGCQGCSAIDVTLKQGVETTLKEHIPELQRVVDQTDHTQAEGAYFK.

Residues C169 and C172 each coordinate [4Fe-4S] cluster.

The protein belongs to the NfuA family. Homodimer. It depends on [4Fe-4S] cluster as a cofactor.

Functionally, involved in iron-sulfur cluster biogenesis. Binds a 4Fe-4S cluster, can transfer this cluster to apoproteins, and thereby intervenes in the maturation of Fe/S proteins. Could also act as a scaffold/chaperone for damaged Fe/S proteins. This chain is Fe/S biogenesis protein NfuA, found in Acinetobacter baumannii (strain AB307-0294).